We begin with the raw amino-acid sequence, 94 residues long: Large ribosomal subunit protein bL27 (94 aa).

Residues 1–9 (MLKLNLQFF) constitute a propeptide that is removed on maturation.

This sequence belongs to the bacterial ribosomal protein bL27 family. The N-terminus is cleaved by ribosomal processing cysteine protease Prp.

The sequence is that of Large ribosomal subunit protein bL27 from Staphylococcus aureus (strain Mu3 / ATCC 700698).